We begin with the raw amino-acid sequence, 286 residues long: MAELSLKKIYSGKVRDLYEIDDKRMLMVASDRLSAFDVILEDPIPRKGEILTQISNFWFKKLAHIMPNHFTGDTVYDVLPKEEADLVKNRAVVVKRLKPIKIESIVRGYLTGSGLKDYKQTGTICGLQLPQGLVEASKLPEPIFTPSSKEEVGDHDINISYAECERQIGKELAAQVRDAAIALYKEAAAYALTKGIIICDTKFEFGLDENGTLTLMDEVLTPDSSRFWSVDTYREGTNPPSFDKQFVRDWLEQSGWNKQPPAPKVPADVIQKTVDKYQEALDLLTK.

This sequence belongs to the SAICAR synthetase family.

It carries out the reaction 5-amino-1-(5-phospho-D-ribosyl)imidazole-4-carboxylate + L-aspartate + ATP = (2S)-2-[5-amino-1-(5-phospho-beta-D-ribosyl)imidazole-4-carboxamido]succinate + ADP + phosphate + 2 H(+). It functions in the pathway purine metabolism; IMP biosynthesis via de novo pathway; 5-amino-1-(5-phospho-D-ribosyl)imidazole-4-carboxamide from 5-amino-1-(5-phospho-D-ribosyl)imidazole-4-carboxylate: step 1/2. The protein is Phosphoribosylaminoimidazole-succinocarboxamide synthase of Mannheimia succiniciproducens (strain KCTC 0769BP / MBEL55E).